We begin with the raw amino-acid sequence, 198 residues long: Translation initiation factor IF-3 (198 aa).

The disordered stretch occupies residues 168–198 (SLAPKKAGSPKKAETDTAKKENPKKAVETKE). Over residues 178 to 198 (KKAETDTAKKENPKKAVETKE) the composition is skewed to basic and acidic residues.

This sequence belongs to the IF-3 family. As to quaternary structure, monomer.

The protein resides in the cytoplasm. In terms of biological role, IF-3 binds to the 30S ribosomal subunit and shifts the equilibrium between 70S ribosomes and their 50S and 30S subunits in favor of the free subunits, thus enhancing the availability of 30S subunits on which protein synthesis initiation begins. The protein is Translation initiation factor IF-3 of Phocaeicola vulgatus (strain ATCC 8482 / DSM 1447 / JCM 5826 / CCUG 4940 / NBRC 14291 / NCTC 11154) (Bacteroides vulgatus).